We begin with the raw amino-acid sequence, 1344 residues long: Myb-binding protein 1A (1344 aa).

The tract at residues 1 to 24 (MAEMKSPTKAEPASPAEAPQGDRR) is disordered. Residue A2 is modified to N-acetylalanine. The interval 2–580 (AEMKSPTKAE…WDQMMSTLKE (579 aa)) is interaction with MYB. S14 bears the Phosphoserine mark. An N6-acetyllysine mark is found at K69 and K156. 2 short sequence motifs (nuclear export signal) span residues 238–256 (SEDNIPSLVNILKVAANSV) and 261–279 (KLPDVALNLLRLALQENKF). Disordered regions lie at residues 696–752 (NEDE…DVDP) and 1150–1344 (PKSE…VQTP). Over residues 708–730 (TDEKQLKHGEDADSDSEDSKNSE) the composition is skewed to basic and acidic residues. Residues 731–746 (SDVDSEDGEESEEEDR) show a composition bias toward acidic residues. Positions 1150–1161 (PKSEKKNVKDIP) are enriched in basic and acidic residues. Residue K1151 forms a Glycyl lysine isopeptide (Lys-Gly) (interchain with G-Cter in SUMO2) linkage. The tract at residues 1154-1344 (KKNVKDIPSD…RVARRRVQTP (191 aa)) is required for nuclear and nucleolar localization. S1162 and S1166 each carry phosphoserine. A compositionally biased stretch (basic residues) spans 1170–1187 (TKRKKKGFLPETKKRKKL). Position 1189 is a phosphoserine (S1189). Position 1193 is a phosphothreonine (T1193). S1221 and S1246 each carry phosphoserine. Positions 1247–1256 (PAPNNPTLSP) are enriched in low complexity. Phosphothreonine is present on T1253. The residue at position 1255 (S1255) is a Phosphoserine. Residues T1258 and T1280 each carry the phosphothreonine modification. Phosphoserine occurs at positions 1283, 1305, and 1318. Residues 1301–1316 (VKRRSSQSALPKKRAR) show a composition bias toward basic residues. Low complexity predominate over residues 1317 to 1329 (LSLVSRSPSLLQS). R1322 is modified (citrulline). 3 positions are modified to phosphoserine: S1323, S1325, and S1329. The segment covering 1331 to 1344 (IRKRRVARRRVQTP) has biased composition (basic residues).

Belongs to the MYBBP1A family. Binds to and represses JUN and MYB via the leucine zipper regions present in these proteins. Also binds to and represses PPARGC1A: this interaction is abrogated when PPARGC1A is phosphorylated by MAPK1/ERK. Binds to and stimulates transcription by AHR. Binds to KPNA2. Component of the B-WICH complex, at least composed of SMARCA5/SNF2H, BAZ1B/WSTF, SF3B1, DEK, MYO1C, ERCC6, MYBBP1A and DDX21. Interacts with CLOCK and CRY1. Post-translationally, citrullinated by PADI4.

The protein localises to the nucleus. It is found in the nucleolus. It localises to the cytoplasm. May activate or repress transcription via interactions with sequence specific DNA-binding proteins. Repression may be mediated at least in part by histone deacetylase activity (HDAC activity). Acts as a corepressor and in concert with CRY1, represses the transcription of the core circadian clock component PER2. Preferentially binds to dimethylated histone H3 'Lys-9' (H3K9me2) on the PER2 promoter. Has a role in rRNA biogenesis together with PWP1. The chain is Myb-binding protein 1A (Mybbp1a) from Rattus norvegicus (Rat).